Consider the following 92-residue polypeptide: Small ribosomal subunit protein uS19 (92 aa).

It belongs to the universal ribosomal protein uS19 family.

In terms of biological role, protein S19 forms a complex with S13 that binds strongly to the 16S ribosomal RNA. The polypeptide is Small ribosomal subunit protein uS19 (Lactococcus lactis subsp. lactis (strain IL1403) (Streptococcus lactis)).